Reading from the N-terminus, the 425-residue chain is Potassium/proton antiporter CemA (425 aa).

Residues 89 to 109 (LFLTTVKCLFILLFVPLGINF) traverse the membrane as a helical segment. The segment at 159–278 (LSENQIFFGL…KTDFASVFRT (120 aa)) is insert. Positions 173–192 (STFPSSEKSQKSEHFSNQDE) are disordered. Residues 180–192 (KSQKSEHFSNQDE) are compositionally biased toward basic and acidic residues. Helical transmembrane passes span 300 to 320 (IEAI…CYLL), 350 to 370 (ILFI…ELFF), and 386 to 406 (IFLL…YLIF).

This sequence belongs to the CemA family.

The protein localises to the plastid. It localises to the chloroplast inner membrane. It catalyses the reaction K(+)(in) + H(+)(out) = K(+)(out) + H(+)(in). Functionally, contributes to K(+)/H(+) antiport activity by supporting proton efflux to control proton extrusion and homeostasis in chloroplasts in a light-dependent manner to modulate photosynthesis. Prevents excessive induction of non-photochemical quenching (NPQ) under continuous-light conditions. Indirectly promotes efficient inorganic carbon uptake into chloroplasts. In Tetradesmus obliquus (Green alga), this protein is Potassium/proton antiporter CemA.